The chain runs to 1128 residues: Apoptosis-stimulating of p53 protein 2 (1128 aa).

A disordered region spans residues 85-120 (PPNRDIVSGPRSQDPSVKRNGVKVPGEHRRKENGVN). The interval 332-348 (NLPQQAVSAPSRVAAVG) is interaction with APPBP1. The disordered stretch occupies residues 393–436 (MRSGAASQSKGSKAHPASPDWNPSNADLLPSQGSSVPQSAGTAL). The segment covering 413–433 (WNPSNADLLPSQGSSVPQSAG) has biased composition (polar residues). Residues Ser-479, Ser-555, Ser-568, Ser-571, and Ser-575 each carry the phosphoserine modification. Disordered stretches follow at residues 549 to 596 (QARM…FPPA) and 654 to 705 (NPQQ…LPFL). The segment covering 562-574 (GQDQVLSPASKQE) has biased composition (polar residues). Residues 654–669 (NPQQHPENIYSCSQGK) show a composition bias toward polar residues. Residues 684–693 (HESHENERIP) are compositionally biased toward basic and acidic residues. Ser-697, Ser-713, and Ser-736 each carry phosphoserine. Disordered stretches follow at residues 723–748 (KLSN…GPNI), 802–824 (SLVP…SDVP), and 870–907 (PPPP…KRTN). The short motif at 866–875 (YPPYPPPPYP) is the SH3-binding element. Residues 876 to 1128 (SGEPEVSEED…RIKPRQRSLA (253 aa)) are mediates interaction with APC2. ANK repeat units follow at residues 958 to 987 (EGIT…NVNA) and 991 to 1020 (DGWT…AVFA). An SH3 domain is found at 1057 to 1119 (MNKGVIYALW…PRNLLGLYPR (63 aa)).

It belongs to the ASPP family. In terms of assembly, interacts with P53/TP53; the interaction promotes pro-apoptotic activity. Interacts with BCL2. Interacts with protein phosphatase 1. Interacts with RELA NF-kappa-B subunit. This interaction probably prevents the activation of apoptosis, possibly by preventing its interaction with p53/TP53. Interacts with APC2 and APPBP1. Interacts with DDX42 (via the C-terminus); the interaction is not inhibited by TP53BP2 ubiquitination and is independent of p53/TP53.

The protein resides in the cytoplasm. The protein localises to the perinuclear region. Its subcellular location is the nucleus. Regulator that plays a central role in regulation of apoptosis and cell growth via its interactions with proteins such as TP53. Regulates p53/TP53 by enhancing the DNA binding and transactivation function of p53/TP53 on the promoters of proapoptotic genes in vivo. Inhibits the ability of APPBP1 to conjugate NEDD8 to CUL1, and thereby decreases APPBP1 ability to induce apoptosis. Impedes cell cycle progression at G2/M. Its apoptosis-stimulating activity is inhibited by its interaction with DDX42. In Mus musculus (Mouse), this protein is Apoptosis-stimulating of p53 protein 2 (Tp53bp2).